The sequence spans 143 residues: MKYKFAIGFFISPSEFLLYNDYKKIRTIYNTVRVGGIDREVRVGIAHFMEGEYRIYIEGIPITVYRGDKTSASIYMSWGNWISMYNLSLERFLWAYNAKAIVIRPTGFKRGEGCLRRVLDEIDAGVYSGGRLLKPTIVQLREE.

This is an uncharacterized protein from Thermoproteus tenax virus 1 (strain KRA1) (TTV1).